A 278-amino-acid chain; its full sequence is Putative cysteine-rich repeat secretory protein 17 (278 aa).

Positions 1–32 (MYSLSSVSKHLILVHILALVATQLLLIRSVSS) are cleaved as a signal peptide. Gnk2-homologous domains follow at residues 39–142 (YLNH…SIDN) and 148–265 (YGDS…LYPF).

The protein belongs to the cysteine-rich repeat secretory protein family.

The protein localises to the secreted. The sequence is that of Putative cysteine-rich repeat secretory protein 17 (CRRSP17) from Arabidopsis thaliana (Mouse-ear cress).